The primary structure comprises 301 residues: uncharacterized protein (301 aa).

At Met1–Lys5 the chain is on the extracellular side. Residues Phe6–Ile26 form a helical membrane-spanning segment. Residues Leu27 to Arg112 lie on the Cytoplasmic side of the membrane. Residues Val113–Ile133 form a helical membrane-spanning segment. The Extracellular segment spans residues Ala134–Thr143. The helical transmembrane segment at Ala144–Leu164 threads the bilayer. Residues Tyr165–Gly191 lie on the Cytoplasmic side of the membrane. The chain crosses the membrane as a helical span at residues Leu192–Ala212. Over Thr213 to Ser301 the chain is Extracellular. The tract at residues Val254–Ser301 is disordered. The span at Gln261–Thr275 shows a compositional bias: basic residues. The span at Glu282–Tyr292 shows a compositional bias: basic and acidic residues.

The protein belongs to the SUR7 family.

The protein resides in the cell membrane. In terms of biological role, involved in sporulation and affects the sphingolipid composition of the plasma membrane. This is an uncharacterized protein from Saccharomyces cerevisiae (strain ATCC 204508 / S288c) (Baker's yeast).